The chain runs to 327 residues: Ribosomal RNA small subunit methyltransferase H (327 aa).

S-adenosyl-L-methionine contacts are provided by residues 36–38, D61, F88, D114, and Q121; that span reads GGH.

This sequence belongs to the methyltransferase superfamily. RsmH family.

It localises to the cytoplasm. It carries out the reaction cytidine(1402) in 16S rRNA + S-adenosyl-L-methionine = N(4)-methylcytidine(1402) in 16S rRNA + S-adenosyl-L-homocysteine + H(+). In terms of biological role, specifically methylates the N4 position of cytidine in position 1402 (C1402) of 16S rRNA. This Chlorobium phaeovibrioides (strain DSM 265 / 1930) (Prosthecochloris vibrioformis (strain DSM 265)) protein is Ribosomal RNA small subunit methyltransferase H.